Consider the following 347-residue polypeptide: N-acetyl-gamma-glutamyl-phosphate reductase (347 aa).

C151 is an active-site residue.

This sequence belongs to the NAGSA dehydrogenase family. Type 1 subfamily.

Its subcellular location is the cytoplasm. The enzyme catalyses N-acetyl-L-glutamate 5-semialdehyde + phosphate + NADP(+) = N-acetyl-L-glutamyl 5-phosphate + NADPH + H(+). The protein operates within amino-acid biosynthesis; L-arginine biosynthesis; N(2)-acetyl-L-ornithine from L-glutamate: step 3/4. Its function is as follows. Catalyzes the NADPH-dependent reduction of N-acetyl-5-glutamyl phosphate to yield N-acetyl-L-glutamate 5-semialdehyde. This is N-acetyl-gamma-glutamyl-phosphate reductase from Corynebacterium diphtheriae (strain ATCC 700971 / NCTC 13129 / Biotype gravis).